We begin with the raw amino-acid sequence, 141 residues long: Hemoglobin subunit alpha-D (141 aa).

The Globin domain maps to 1–141 (MLTAEDKKLI…VAAVLAEKYR (141 aa)). The heme b site is built by H58 and H87.

This sequence belongs to the globin family. Heterotetramer of two alpha-D chains and two beta chains. In terms of tissue distribution, red blood cells.

In terms of biological role, involved in oxygen transport from the lung to the various peripheral tissues. This is Hemoglobin subunit alpha-D (HBAD) from Accipiter gentilis (Northern goshawk).